Consider the following 23-residue polypeptide: Cytochrome c oxidase subunit 7A-liver, mitochondrial (23 aa).

This sequence belongs to the cytochrome c oxidase VIIa family. In terms of assembly, component of the cytochrome c oxidase (complex IV, CIV), a multisubunit enzyme composed of 14 subunits. The complex is composed of a catalytic core of 3 subunits MT-CO1, MT-CO2 and MT-CO3, encoded in the mitochondrial DNA, and 11 supernumerary subunits COX4I, COX5A, COX5B, COX6A, COX6B, COX6C, COX7A, COX7B, COX7C, COX8 and NDUFA4, which are encoded in the nuclear genome. The complex exists as a monomer or a dimer and forms supercomplexes (SCs) in the inner mitochondrial membrane with NADH-ubiquinone oxidoreductase (complex I, CI) and ubiquinol-cytochrome c oxidoreductase (cytochrome b-c1 complex, complex III, CIII), resulting in different assemblies (supercomplex SCI(1)III(2)IV(1) and megacomplex MCI(2)III(2)IV(2)).

The protein resides in the mitochondrion inner membrane. It functions in the pathway energy metabolism; oxidative phosphorylation. Functionally, component of the cytochrome c oxidase, the last enzyme in the mitochondrial electron transport chain which drives oxidative phosphorylation. The respiratory chain contains 3 multisubunit complexes succinate dehydrogenase (complex II, CII), ubiquinol-cytochrome c oxidoreductase (cytochrome b-c1 complex, complex III, CIII) and cytochrome c oxidase (complex IV, CIV), that cooperate to transfer electrons derived from NADH and succinate to molecular oxygen, creating an electrochemical gradient over the inner membrane that drives transmembrane transport and the ATP synthase. Cytochrome c oxidase is the component of the respiratory chain that catalyzes the reduction of oxygen to water. Electrons originating from reduced cytochrome c in the intermembrane space (IMS) are transferred via the dinuclear copper A center (CU(A)) of subunit 2 and heme A of subunit 1 to the active site in subunit 1, a binuclear center (BNC) formed by heme A3 and copper B (CU(B)). The BNC reduces molecular oxygen to 2 water molecules using 4 electrons from cytochrome c in the IMS and 4 protons from the mitochondrial matrix. The protein is Cytochrome c oxidase subunit 7A-liver, mitochondrial of Oncorhynchus mykiss (Rainbow trout).